The sequence spans 157 residues: MQLTVKALQGRECSLQVAEDELVSTLKHLVSDKLNVPVRQQRLLFKGKALADEKRLSDYNIGPNSKLNLVVKPLEKVLLEEGSAHRLVDSPATPIWQLISKVLARHFSVADASRVLEQLQRDYDRSLSRLTLDDIERLASRFLHPEVTEAMEKGFCK.

The Ubiquitin-like domain occupies 1 to 76 (MQLTVKALQG…LNLVVKPLEK (76 aa)). A Glycyl lysine isopeptide (Lys-Gly) (interchain with G-Cter in ubiquitin) cross-link involves residue Lys-48. At Ser-90 the chain carries Phosphoserine. The required and sufficient for interaction with BAG6 stretch occupies residues 96–138 (WQLISKVLARHFSVADASRVLEQLQRDYDRSLSRLTLDDIERL).

Component of the BAG6/BAT3 complex, at least composed of BAG6, UBL4A and GET4/TRC35. Interacts with BAG6; the interaction is direct and required for UBL4A protein stability. Interacts with USP13; may be indirect via BAG6. Post-translationally, polyubiquitinated. Ubiquitination by AMFR and deubiquitination by USP13 may regulate the interaction between the BAG6/BAT3 complex and SGTA and therefore may regulate client proteins fate.

Its subcellular location is the cytoplasm. The protein localises to the cytosol. It is found in the nucleus. As part of a cytosolic protein quality control complex, the BAG6/BAT3 complex, maintains misfolded and hydrophobic patches-containing proteins in a soluble state and participates in their proper delivery to the endoplasmic reticulum or alternatively can promote their sorting to the proteasome where they undergo degradation. The BAG6/BAT3 complex is involved in the post-translational delivery of tail-anchored/type II transmembrane proteins to the endoplasmic reticulum membrane. Recruited to ribosomes, it interacts with the transmembrane region of newly synthesized tail-anchored proteins and together with SGTA and ASNA1 mediates their delivery to the endoplasmic reticulum. Client proteins that cannot be properly delivered to the endoplasmic reticulum are ubiquitinated and sorted to the proteasome. Similarly, the BAG6/BAT3 complex also functions as a sorting platform for proteins of the secretory pathway that are mislocalized to the cytosol either delivering them to the proteasome for degradation or to the endoplasmic reticulum. The BAG6/BAT3 complex also plays a role in the endoplasmic reticulum-associated degradation (ERAD), a quality control mechanism that eliminates unwanted proteins of the endoplasmic reticulum through their retrotranslocation to the cytosol and their targeting to the proteasome. It maintains these retrotranslocated proteins in an unfolded yet soluble state condition in the cytosol to ensure their proper delivery to the proteasome. The protein is Ubiquitin-like protein 4A of Mus musculus (Mouse).